A 385-amino-acid chain; its full sequence is Putative mitochondrial carrier protein TRV_02148.2 (385 aa).

2 Solcar repeats span residues 24 to 124 and 130 to 210; these read SNTL…LHAR and RTAG…LRRR. The next 5 membrane-spanning stretches (helical) occupy residues 30-47, 132-150, 184-207, 263-279, and 294-310; these read GTAI…DSIL, AGNE…KLFT, WSAY…YLAL, YTIC…LEVI, and VVTV…LYML.

This sequence belongs to the mitochondrial carrier (TC 2.A.29) family.

It localises to the mitochondrion inner membrane. Functionally, may function as a mitochondrial transporter. This Trichophyton verrucosum (strain HKI 0517) protein is Putative mitochondrial carrier protein TRV_02148.2.